Here is a 183-residue protein sequence, read N- to C-terminus: Putative manganese efflux pump MntP 1 (183 aa).

6 helical membrane passes run 6 to 26 (LFLL…CIGI), 36 to 56 (IIFV…GGYI), 64 to 84 (IVPI…ILMI), 100 to 120 (IMYL…GFTT), 130 to 150 (LFMS…LGII), and 158 to 178 (ISII…LFGL).

This sequence belongs to the MntP (TC 9.B.29) family.

Its subcellular location is the cell membrane. Probably functions as a manganese efflux pump. The protein is Putative manganese efflux pump MntP 1 of Clostridium botulinum (strain Langeland / NCTC 10281 / Type F).